The chain runs to 344 residues: MKKRIAIVLFNLGGPKNLESVKPFLFNLFYDKAIINLPNPFRYIIAKIISTTRERKSQKIYSLIGGKSSLLQETEEQKLALTEKLKQLIKEDFAIFINMRYSAPFAKEVIDQIKKYNPSEIILLPLYPQFSSTTTGSSVKNFLQNFDIDISIKTICCYPQEEDFIKSHVSLIKEKLYDDDKNFRILFSAHGLPEKIIKAGDPYSFQIKETVKAIVKELNIKDLDYKITYQSRVGPIEWLKPNTEDEIELAGKLKKDIIIVPISFVSEHVETLVELDIEYKLIADKYEVQYTRIPTLGTNKIFINSLTNILLQFINKVDTNLVTSSSSTRICPNEFTKCLCKLTN.

Fe cation-binding residues include histidine 190 and glutamate 270.

Belongs to the ferrochelatase family.

It is found in the cytoplasm. The catalysed reaction is heme b + 2 H(+) = protoporphyrin IX + Fe(2+). It participates in porphyrin-containing compound metabolism; protoheme biosynthesis; protoheme from protoporphyrin-IX: step 1/1. Functionally, catalyzes the ferrous insertion into protoporphyrin IX. This chain is Ferrochelatase, found in Rickettsia felis (strain ATCC VR-1525 / URRWXCal2) (Rickettsia azadi).